Here is a 405-residue protein sequence, read N- to C-terminus: Probable tRNA sulfurtransferase (405 aa).

The THUMP domain maps to 60–165 (DQVMARLSQV…REAIYLSTKT (106 aa)). Residues 183-184 (ML), 208-209 (HF), Arg265, Gly287, and Gln296 each bind ATP.

It belongs to the ThiI family.

The protein localises to the cytoplasm. It catalyses the reaction [ThiI sulfur-carrier protein]-S-sulfanyl-L-cysteine + a uridine in tRNA + 2 reduced [2Fe-2S]-[ferredoxin] + ATP + H(+) = [ThiI sulfur-carrier protein]-L-cysteine + a 4-thiouridine in tRNA + 2 oxidized [2Fe-2S]-[ferredoxin] + AMP + diphosphate. The catalysed reaction is [ThiS sulfur-carrier protein]-C-terminal Gly-Gly-AMP + S-sulfanyl-L-cysteinyl-[cysteine desulfurase] + AH2 = [ThiS sulfur-carrier protein]-C-terminal-Gly-aminoethanethioate + L-cysteinyl-[cysteine desulfurase] + A + AMP + 2 H(+). It functions in the pathway cofactor biosynthesis; thiamine diphosphate biosynthesis. Catalyzes the ATP-dependent transfer of a sulfur to tRNA to produce 4-thiouridine in position 8 of tRNAs, which functions as a near-UV photosensor. Also catalyzes the transfer of sulfur to the sulfur carrier protein ThiS, forming ThiS-thiocarboxylate. This is a step in the synthesis of thiazole, in the thiamine biosynthesis pathway. The sulfur is donated as persulfide by IscS. The chain is Probable tRNA sulfurtransferase from Lacticaseibacillus casei (strain BL23) (Lactobacillus casei).